A 152-amino-acid chain; its full sequence is MTIWVDADACPNVIKEILYRAAERMQLPLVLVANQSLRVPPSRFIRTLRVAAGFDVADNEIVRQCEAGDLVITADIPLAAEAIEKGAAALNPRGERYTPATIRERLTMRDFMDTLRASGIQTGGPDSLSQRDRQAFAAELEKWWLEVQRSRG.

It belongs to the UPF0178 family.

This chain is UPF0178 protein YaiI, found in Escherichia coli O17:K52:H18 (strain UMN026 / ExPEC).